Reading from the N-terminus, the 164-residue chain is Transcription elongation factor GreA (164 aa).

This sequence belongs to the GreA/GreB family.

In terms of biological role, necessary for efficient RNA polymerase transcription elongation past template-encoded arresting sites. The arresting sites in DNA have the property of trapping a certain fraction of elongating RNA polymerases that pass through, resulting in locked ternary complexes. Cleavage of the nascent transcript by cleavage factors such as GreA or GreB allows the resumption of elongation from the new 3'terminus. GreA releases sequences of 2 to 3 nucleotides. The sequence is that of Transcription elongation factor GreA from Helicobacter pylori (strain P12).